The chain runs to 616 residues: Male-specific lethal 1 homolog (616 aa).

The tract at residues 1–116 (MTMRSAVFKA…PPATKQAGIG (116 aa)) is disordered. Residue Ser66 is modified to Phosphoserine. The span at 81 to 91 (GLLLPAGAAPG) shows a compositional bias: low complexity. Ser127 carries the phosphoserine modification. Positions 152-218 (TPWAGDKGGA…LGGGGGSGAS (67 aa)) are disordered. Over residues 153–171 (PWAGDKGGAAPPAATASDP) the composition is skewed to low complexity. The span at 172-186 (AGPPPLPLPGPPPLA) shows a compositional bias: pro residues. A compositionally biased stretch (low complexity) spans 187–196 (PTATAGTLAA). At Ser207 the chain carries Phosphoserine. Residues 215–284 (SGASSQAACL…RDNEKERHKL (70 aa)) adopt a coiled-coil conformation. Positions 225–239 (KQILLLQLDLIEQQQ) are interaction with MSL2. Residue Lys303 forms a Glycyl lysine isopeptide (Lys-Gly) (interchain with G-Cter in SUMO2) linkage. A disordered region spans residues 306-422 (RQPELCETSQ…PKEKAFSSEM (117 aa)). The Nuclear localization signal motif lies at 319–348 (SKPFSCGRSGKGHKRKTPFGNTERKTPVKK). N6-acetyllysine is present on Lys355. Residues Thr358 and Thr360 each carry the phosphothreonine modification. The residue at position 364 (Ser364) is a Phosphoserine. Residues Lys367 and Lys380 each participate in a glycyl lysine isopeptide (Lys-Gly) (interchain with G-Cter in SUMO2) cross-link. Residues 378–394 (VCKRELRSQETPEKPRS) show a composition bias toward basic and acidic residues. A Phosphoserine modification is found at Ser385. At Thr388 the chain carries Phosphothreonine. Position 395 is a phosphoserine (Ser395). Over residues 395–409 (SVDTPPRLSTPQKGP) the composition is skewed to polar residues. Phosphothreonine is present on residues Thr398 and Thr404. Residues Ser444, Ser452, and Ser484 each carry the phosphoserine modification. The PEHE domain maps to 474-593 (VLAVPSWRDH…LAPQNFELPW (120 aa)). The tract at residues 498 to 516 (ENLDDSVFSKRHAKLELDE) is interaction with KAT8 HAT domain. A Bipartite nuclear localization signal motif is present at residues 507-521 (KRHAKLELDEKRRKR). The interval 552-593 (EVTSFFPEPDDVESLLITPFLPVVAFGRPLPKLAPQNFELPW) is interaction with MSL3 MRG domain.

This sequence belongs to the msl-1 family. In terms of assembly, component of a multisubunit histone acetyltransferase complex (MSL) at least composed of the KAT8/MOF/MYST1, MSL1/hampin, MSL2 and MSL3. Interacts (via PEHE domain) with KAT8 (via HAT domain) and MSL3 (via MRG domain); both interactions are direct. Directly interacts with MSL2 via its coiled coil domain. Directly interacts with NUPR1. Interacts with TP53BP1; this interaction may be required for MSL1 DNA repair activity, but not for histone acetyltransferase activity. Forms a MSL heterotetrameric core with MSL2. Isoform 1 and isoform 3 interact with TTC4. Isoform 1 interacts with ECM2 and PIHD1. Sumoylated with SUMO1. In terms of tissue distribution, isoform 3 and isoform 5 are testis-specific. Isoform 1 and isoform 4 are ubiquitously expressed. Isoform 2 is expressed at low levels in the testis and brain.

It localises to the nucleus. Its subcellular location is the nucleus speckle. The protein resides in the nucleoplasm. Its function is as follows. Non-catalytic component of the MSL histone acetyltransferase complex, a multiprotein complex that mediates the majority of histone H4 acetylation at 'Lys-16' (H4K16ac), an epigenetic mark that prevents chromatin compaction. The MSL complex is required for chromosome stability and genome integrity by maintaining homeostatic levels of H4K16ac. The MSL complex is also involved in gene dosage by promoting up-regulation of genes expressed by the X chromosome. X up-regulation is required to compensate for autosomal biallelic expression. The MSL complex also participates in gene dosage compensation by promoting expression of Tsix non-coding RNA. Within the MSL complex, acts as a scaffold to tether MSL3 and KAT8 together for enzymatic activity regulation. Greatly enhances MSL2 E3 ubiquitin ligase activity, promoting monoubiquitination of histone H2B at 'Lys-34' (H2BK34Ub). This modification in turn stimulates histone H3 methylation at 'Lys-4' (H3K4me) and 'Lys-79' (H3K79me) and leads to gene activation, including that of HOXA9 and MEIS1. This chain is Male-specific lethal 1 homolog, found in Mus musculus (Mouse).